Reading from the N-terminus, the 257-residue chain is Transmembrane protein C257L (257 aa).

2 helical membrane-spanning segments follow: residues 123-143 and 163-183; these read LELL…FTAL and MMIF…YVLV.

It belongs to the asfivirus C257R family.

The protein localises to the host membrane. It is found in the virion. The chain is Transmembrane protein C257L from African swine fever virus (isolate Tick/South Africa/Pretoriuskop Pr4/1996) (ASFV).